Consider the following 409-residue polypeptide: Tyrosine--tRNA ligase (409 aa).

Residues 54–63 (PTAPDIHLGH) carry the 'HIGH' region motif. A 'KMSKS' region motif is present at residues 238 to 242 (KMSKS). An ATP-binding site is contributed by K241. Residues 347 to 407 (QGILRILREA…GKRKFARVKL (61 aa)) form the S4 RNA-binding domain.

The protein belongs to the class-I aminoacyl-tRNA synthetase family. TyrS type 2 subfamily. Homodimer.

The protein localises to the cytoplasm. The catalysed reaction is tRNA(Tyr) + L-tyrosine + ATP = L-tyrosyl-tRNA(Tyr) + AMP + diphosphate + H(+). Catalyzes the attachment of tyrosine to tRNA(Tyr) in a two-step reaction: tyrosine is first activated by ATP to form Tyr-AMP and then transferred to the acceptor end of tRNA(Tyr). This chain is Tyrosine--tRNA ligase, found in Bordetella bronchiseptica (strain ATCC BAA-588 / NCTC 13252 / RB50) (Alcaligenes bronchisepticus).